Reading from the N-terminus, the 241-residue chain is 3-dehydroquinate dehydratase (241 aa).

Residues 35–37 (ELR) and Arg70 each bind 3-dehydroquinate. His133 (proton donor/acceptor) is an active-site residue. Catalysis depends on Lys160, which acts as the Schiff-base intermediate with substrate. The 3-dehydroquinate site is built by Arg202 and Gln225.

The protein belongs to the type-I 3-dehydroquinase family. In terms of assembly, homodimer.

The enzyme catalyses 3-dehydroquinate = 3-dehydroshikimate + H2O. It participates in metabolic intermediate biosynthesis; chorismate biosynthesis; chorismate from D-erythrose 4-phosphate and phosphoenolpyruvate: step 3/7. Functionally, involved in the third step of the chorismate pathway, which leads to the biosynthesis of aromatic amino acids. Catalyzes the cis-dehydration of 3-dehydroquinate (DHQ) and introduces the first double bond of the aromatic ring to yield 3-dehydroshikimate. This Staphylococcus haemolyticus (strain JCSC1435) protein is 3-dehydroquinate dehydratase.